The chain runs to 518 residues: Putative ribose/galactose/methyl galactoside import ATP-binding protein (518 aa).

The disordered stretch occupies residues 1-22 (MSIAVLDRPMSRQDTPSASSVP). Positions 12–22 (RQDTPSASSVP) are enriched in polar residues. 2 consecutive ABC transporter domains span residues 29–265 (LEVR…VGRE) and 275–515 (VPIG…VMEL). An ATP-binding site is contributed by 61-68 (GENGAGKS).

It belongs to the ABC transporter superfamily. Carbohydrate importer 2 (CUT2) (TC 3.A.1.2) family.

It localises to the cell inner membrane. It catalyses the reaction D-ribose(out) + ATP + H2O = D-ribose(in) + ADP + phosphate + H(+). The catalysed reaction is D-galactose(out) + ATP + H2O = D-galactose(in) + ADP + phosphate + H(+). Part of an ABC transporter complex involved in carbohydrate import. Could be involved in ribose, galactose and/or methyl galactoside import. Responsible for energy coupling to the transport system. The polypeptide is Putative ribose/galactose/methyl galactoside import ATP-binding protein (Ralstonia nicotianae (strain ATCC BAA-1114 / GMI1000) (Ralstonia solanacearum)).